The primary structure comprises 393 residues: S-adenosylmethionine synthase 2 (393 aa).

Glu9 serves as a coordination point for Mg(2+). His15 provides a ligand contact to ATP. K(+) is bound at residue Glu43. Positions 56 and 99 each coordinate L-methionine. Residues 167–169 (DGK), 235–238 (SGRF), Asp246, 252–253 (RK), Ala269, Lys273, and Lys277 contribute to the ATP site. Asp246 is an L-methionine binding site. Residue Lys277 coordinates L-methionine.

This sequence belongs to the AdoMet synthase family. Homotetramer. Requires Mn(2+) as cofactor. It depends on Mg(2+) as a cofactor. Co(2+) is required as a cofactor. K(+) serves as cofactor. The cofactor is NH4(+). As to expression, mostly expressed in roots, and, to a lower extent, in hypocotyls and cotyledons.

It localises to the cytoplasm. The enzyme catalyses L-methionine + ATP + H2O = S-adenosyl-L-methionine + phosphate + diphosphate. It participates in amino-acid biosynthesis; S-adenosyl-L-methionine biosynthesis; S-adenosyl-L-methionine from L-methionine: step 1/1. Its activity is regulated as follows. Inhibited by products of SAMS reaction (SAM, Pi, PPi), substrate analogs (cycloleucine and ethionine), and alternative nucleotides (GTP, CTP and ADP). Strongly repressed by PPPi. Functionally, catalyzes the formation of S-adenosylmethionine from methionine and ATP. The reaction comprises two steps that are both catalyzed by the same enzyme: formation of S-adenosylmethionine (AdoMet) and triphosphate, and subsequent hydrolysis of the triphosphate. The chain is S-adenosylmethionine synthase 2 (SAMS2) from Catharanthus roseus (Madagascar periwinkle).